Here is a 517-residue protein sequence, read N- to C-terminus: V-type proton ATPase subunit B (517 aa).

Serine 4 is subject to Phosphoserine. A Glycyl lysine isopeptide (Lys-Gly) (interchain with G-Cter in ubiquitin) cross-link involves residue lysine 14. Serine 137 carries the post-translational modification Phosphoserine. Arginine 381 contributes to the ATP binding site. The segment at 487–517 is disordered; sequence RARDDADEDEEDPDTRSSGKKKDASQEESLI. Residues 500–511 show a composition bias toward basic and acidic residues; it reads DTRSSGKKKDAS. 2 positions are modified to phosphoserine: serine 503 and serine 504. Lysine 508 is covalently cross-linked (Glycyl lysine isopeptide (Lys-Gly) (interchain with G-Cter in ubiquitin)). Phosphoserine; by ATM or ATR is present on serine 511. Serine 515 carries the phosphoserine modification.

It belongs to the ATPase alpha/beta chains family. In terms of assembly, V-ATPase is a heteromultimeric enzyme composed of a peripheral catalytic V1 complex (components A to H) attached to an integral membrane V0 proton pore complex (components: a, c, c', c'', d, e, f and VOA1). Interacts with RAV1 and RAV2 components of the RAVE complex, which are essential for the stability and assembly of V-ATPase.

It localises to the vacuole membrane. Functionally, non-catalytic subunit of the V1 complex of vacuolar(H+)-ATPase (V-ATPase), a multisubunit enzyme composed of a peripheral complex (V1) that hydrolyzes ATP and a membrane integral complex (V0) that translocates protons. V-ATPase is responsible for acidifying and maintaining the pH of intracellular compartments. The chain is V-type proton ATPase subunit B (VMA2) from Saccharomyces cerevisiae (strain ATCC 204508 / S288c) (Baker's yeast).